Reading from the N-terminus, the 502-residue chain is Zinc finger protein 488 (502 aa).

The region spanning 8–130 is the SET domain; sequence RSLWTNDSKI…EGEELLVWYD (123 aa). Y129 contacts S-adenosyl-L-methionine. Residues 151–174 form a C2H2-type 1; atypical zinc finger; the sequence is YTCTRCGQAFKNENPFLAHCRFLC. Disordered stretches follow at residues 267-303 and 338-361; these read SEPTDNAQTNESKISKNSAFTEVRKAPEPSNPEKSSR and PSKRALAEAQNPSPPDTDNSLDSF. The segment covering 269–286 has biased composition (polar residues); it reads PTDNAQTNESKISKNSAF. C2H2-type zinc fingers lie at residues 438–460 and 479–501; these read NWCAKCNLSFRMTSDLVFHMRSH and LTCPICHEYFRERHHLSRHMTSH.

This sequence belongs to the krueppel C2H2-type zinc-finger protein family. Expressed in pMN progenitors and oligodendrocyte lineage cells in the embryo with expression declining in oligodendrocytes undergoing differentiation.

The protein resides in the nucleus. Its function is as follows. Transcriptional repressor. May have histone methyltransferase activity. Negatively regulates shh signaling activity in pMN progenitor cells which prevents their switch from motor neuron to oligodendrocyte precursor cell production. Independently of shh activity, also regulates oligodendrocyte formation. This is Zinc finger protein 488 from Danio rerio (Zebrafish).